Consider the following 421-residue polypeptide: UDP-glucuronic acid decarboxylase 1 (421 aa).

Residues 1–19 (MVRTRIQRLLTGINRRMMK) lie on the Cytoplasmic side of the membrane. A helical transmembrane segment spans residues 20 to 40 (LLIALALIAYVASVWGNFVNM). Residues 41–421 (SKSIQENGEQ…RVKKGRTRHN (381 aa)) are Lumenal-facing. 10 residues coordinate NAD(+): G99, F100, V101, D120, N121, F123, T124, G125, D145, and V146. 2 residues coordinate UDP-alpha-D-glucuronate: L150 and Y151. The NAD(+) site is built by L160 and S162. Residue K178 participates in UDP-alpha-D-glucuronate binding. NAD(+) is bound at residue T179. The UDP-alpha-D-glucuronate site is built by N186, G189, K192, and R193. NAD(+)-binding residues include A201, Y232, and K236. Y232 (proton acceptor) is an active-site residue. UDP-alpha-D-glucuronate contacts are provided by Y246, Q249, and E250. Positions 262, 268, and 273 each coordinate NAD(+). N-linked (GlcNAc...) asparagine glycosylation is found at N317 and N386. Positions 400 to 421 (ANNQYIPKPKPARVKKGRTRHN) are disordered. Basic residues predominate over residues 409 to 421 (KPARVKKGRTRHN).

This sequence belongs to the NAD(P)-dependent epimerase/dehydratase family. UDP-glucuronic acid decarboxylase subfamily. As to quaternary structure, homodimer and homotetramer. It depends on NAD(+) as a cofactor.

The protein localises to the golgi apparatus. The protein resides in the golgi stack membrane. The enzyme catalyses UDP-alpha-D-glucuronate + H(+) = UDP-alpha-D-xylose + CO2. It participates in nucleotide-sugar biosynthesis; UDP-alpha-D-xylose biosynthesis; UDP-alpha-D-xylose from UDP-alpha-D-glucuronate: step 1/1. Catalyzes the NAD-dependent decarboxylation of UDP-glucuronic acid to UDP-xylose. Necessary for the biosynthesis of the core tetrasaccharide in glycosaminoglycan biosynthesis. This chain is UDP-glucuronic acid decarboxylase 1 (uxs1), found in Xenopus tropicalis (Western clawed frog).